The following is a 122-amino-acid chain: Large ribosomal subunit protein uL14 (122 aa).

It belongs to the universal ribosomal protein uL14 family. Part of the 50S ribosomal subunit. Forms a cluster with proteins L3 and L19. In the 70S ribosome, L14 and L19 interact and together make contacts with the 16S rRNA in bridges B5 and B8.

Functionally, binds to 23S rRNA. Forms part of two intersubunit bridges in the 70S ribosome. This chain is Large ribosomal subunit protein uL14, found in Psychrobacter arcticus (strain DSM 17307 / VKM B-2377 / 273-4).